Here is a 681-residue protein sequence, read N- to C-terminus: Transmembrane protein 168-A (681 aa).

9 consecutive transmembrane segments (helical) span residues 16-36, 47-67, 73-93, 135-155, 156-176, 184-204, 252-272, 281-301, and 346-365; these read FLRCLGYLSSFNLLVAVCLGM, MILVLFILGLFVSAIACILYY, SASLSLFHLWFGFLQGLLCFL, PVVITSSELLELLGFGVASIS, LVFDKSLAMIALTFALTALII, LALPNLACFSVIAAVTFFQSL, FSLFPLALVELLFFVVCAFKL, VIPGFCIFGLLWILCHMVFLV, and LVLFCLMSTIILGAVSWQVA. The N-linked (GlcNAc...) asparagine glycan is linked to asparagine 517.

Belongs to the TMEM168 family.

Its subcellular location is the nucleus membrane. In terms of biological role, plays a key role in maintaining the cardiac electrical stability by modulating cell surface expression of SCN5A. This is Transmembrane protein 168-A (tmem168a) from Danio rerio (Zebrafish).